A 196-amino-acid polypeptide reads, in one-letter code: Ribosome maturation factor RimP (196 aa).

Positions 163 to 196 (GLAPSKPTGPAPKRPKPKTNSSSNEPAAKKPRAE) are disordered.

It belongs to the RimP family.

The protein resides in the cytoplasm. Required for maturation of 30S ribosomal subunits. The chain is Ribosome maturation factor RimP from Stenotrophomonas maltophilia (strain R551-3).